Here is a 557-residue protein sequence, read N- to C-terminus: Low affinity inorganic phosphate transporter 8 (557 aa).

At 1–20 (MATSHGVLRSLDNAKTQSYH) the chain is on the cytoplasmic side. A helical transmembrane segment spans residues 21–41 (YLAIVIAGMGFFTDAYDLFCI). Residues 42–70 (TAVTKLIGRLYYSDPTNHSPGILPTNVNN) lie on the Extracellular side of the membrane. Residues 71–91 (AITGVALCGTLAGQLFFGWLG) form a helical membrane-spanning segment. Topologically, residues 92–98 (DKLGRKK) are cytoplasmic. A helical membrane pass occupies residues 99 to 119 (VYGITLTTMVGFALLSGLSFG). Residues 120–130 (STPKTVVTSLC) lie on the Extracellular side of the membrane. The chain crosses the membrane as a helical span at residues 131–151 (FFRFWLGFGIGGDYPLSAVIM). Residues 152–162 (SEYANQKTRGS) lie on the Cytoplasmic side of the membrane. The helical transmembrane segment at 163–183 (FIAAVFAMQGVGILVAGGVAM) threads the bilayer. Topologically, residues 184–210 (FVSKLFLLYFPAPDFETDAVLSTQPEG) are extracellular. The helical transmembrane segment at 211 to 231 (DFVWRIVLMFGAVPAALTYYW) threads the bilayer. The Cytoplasmic segment spans residues 232-294 (RMKMPETARY…LFSSEFLNRH (63 aa)). The helical transmembrane segment at 295–315 (GLHLLGTTSTWFLLDIAFYSL) threads the bilayer. At 316 to 346 (QLTQKDIYPTSGLVYKASKMNAIEEVFQLSR) the chain is on the extracellular side. The chain crosses the membrane as a helical span at residues 347 to 367 (AMFAVALIATVPGYWCTVFLI). Topologically, residues 368-369 (EK) are cytoplasmic. The helical transmembrane segment at 370 to 390 (IGRFRIQLIGFLVMSVCMWFL) threads the bilayer. The Extracellular portion of the chain corresponds to 391–414 (GHNYRSFRGEESACKNGSKYSFCN). Asn406 is a glycosylation site (N-linked (GlcNAc...) asparagine). The chain crosses the membrane as a helical span at residues 415–435 (GNPVMFAILFGLTLFFANFGP). Residues 436-457 (NSTTFIVPAELFPARLRSTCHG) are Cytoplasmic-facing. A helical membrane pass occupies residues 458-478 (ISAAAGKSGAIVGAFGVQSYI). At 479–490 (GNSHDKSKGTKQ) the chain is on the extracellular side. Residues 491–511 (AIMALAVVNLLGFFFTFLVPE) form a helical membrane-spanning segment. The Cytoplasmic portion of the chain corresponds to 512–557 (TQGRSLEEISGEEKDFQGNNADEEISGERNGTRNASVDKSPETSMV). Positions 519–557 (EISGEEKDFQGNNADEEISGERNGTRNASVDKSPETSMV) are disordered. Residues 543 to 557 (TRNASVDKSPETSMV) are compositionally biased toward polar residues.

It belongs to the major facilitator superfamily. Phosphate:H(+) symporter (TC 2.A.1.9) family.

The protein resides in the cell membrane. The catalysed reaction is phosphate(in) + H(+)(in) = phosphate(out) + H(+)(out). Functionally, low-affinity transporter for external inorganic phosphate (Pi) that may be involved in the acquisition of phosphate released by arbuscular mycorrhizal (AM) fungi (e.g. Glomus versiforme and G.intraradices) during AM symbiosis; not required for mycorrhizal arbuscule development. This Medicago truncatula (Barrel medic) protein is Low affinity inorganic phosphate transporter 8.